The chain runs to 298 residues: Oxidoreductase YdhF (298 aa).

Tyr-55 serves as the catalytic Proton donor. NADP(+) is bound by residues 158 to 159 (SN), 209 to 220 (WSCLGGGRLFND), and 263 to 264 (SG).

The protein belongs to the aldo/keto reductase family. Aldo/keto reductase 2 subfamily.

Its function is as follows. May function as oxidoreductase. This Escherichia coli (strain K12) protein is Oxidoreductase YdhF (ydhF).